The following is a 403-amino-acid chain: MARTAGLREPAAPLEKTPLETYVPPAKPSLIGLSRAELAARLGDVGVPERQQKMRVQQLWHWIYFRGARSFDEMSSVSKDTRTALAERFTVDRPEVVAEQISNDGTRKWLLRLPSGDDLQKAHEVECVYIPETDRGTLCVSSQVGCTLNCAFCHTGTQRLVRNLTAGEIVGQVMVARDRLNDWADRETPHGNRLITNIVMMGMGEPLYNFDAVRDALLIVSDNEGIGISRRRITLSTSGVVPNIKRAGEEIGVMLAISLHAVRDELRDELVPLNRKYPIAELLQACRDYPGASNARRITFEYVMLKGVNDSLDDARLLVKLLKGIPAKINLIPFNPWPGSAYECSDWEQIEKFSEYVFNAGYSSPVRTPRGRDILAACGQLKSETEKLSARERQALRAMAMTD.

The Proton acceptor role is filled by E126. The Radical SAM core domain maps to 132–375; that stretch reads ETDRGTLCVS…VRTPRGRDIL (244 aa). C139 and C378 are oxidised to a cystine. Residues C146, C150, and C153 each coordinate [4Fe-4S] cluster. S-adenosyl-L-methionine is bound by residues 204-205, S236, 258-260, and N335; these read GE and SLH. Catalysis depends on C378, which acts as the S-methylcysteine intermediate.

This sequence belongs to the radical SAM superfamily. RlmN family. Requires [4Fe-4S] cluster as cofactor.

Its subcellular location is the cytoplasm. The catalysed reaction is adenosine(2503) in 23S rRNA + 2 reduced [2Fe-2S]-[ferredoxin] + 2 S-adenosyl-L-methionine = 2-methyladenosine(2503) in 23S rRNA + 5'-deoxyadenosine + L-methionine + 2 oxidized [2Fe-2S]-[ferredoxin] + S-adenosyl-L-homocysteine. The enzyme catalyses adenosine(37) in tRNA + 2 reduced [2Fe-2S]-[ferredoxin] + 2 S-adenosyl-L-methionine = 2-methyladenosine(37) in tRNA + 5'-deoxyadenosine + L-methionine + 2 oxidized [2Fe-2S]-[ferredoxin] + S-adenosyl-L-homocysteine. Functionally, specifically methylates position 2 of adenine 2503 in 23S rRNA and position 2 of adenine 37 in tRNAs. m2A2503 modification seems to play a crucial role in the proofreading step occurring at the peptidyl transferase center and thus would serve to optimize ribosomal fidelity. The sequence is that of Dual-specificity RNA methyltransferase RlmN from Bradyrhizobium sp. (strain BTAi1 / ATCC BAA-1182).